The primary structure comprises 1995 residues: MAAVTMSVPGRKAPPRPGPVPEAAQPFLFTPRGPSAGGGPGSGTSPQVEWTARRLVWVPSELHGFEAAALRDEGEEEAEVELAESGRRLRLPRDQIQRMNPPKFSKAEDMAELTCLNEASVLHNLRERYYSGLIYTYSGLFCVVINPYKQLPIYTEAIVEMYRGKKRHEVPPHVYAVTEGAYRSMLQDREDQSILCTGESGAGKTENTKKVIQYLAHVASSPKGRKEPGVPGELERQLLQANPILEAFGNAKTVKNDNSSRFGKFIRINFDVAGYIVGANIETYLLEKSRAIRQAKDECSFHIFYQLLGGAGEQLKADLLLEPCSHYRFLTNGPSSSPGQERELFQETLESLRVLGFSHEEIISMLRMVSAVLQFGNIALKRERNTDQATMPDNTAAQKLCRLLGLGVTDFSRALLTPRIKVGRDYVQKAQTKEQADFALEALAKATYERLFRWLVLRLNRALDRSPRQGASFLGILDIAGFEIFQLNSFEQLCINYTNEKLQQLFNHTMFVLEQEEYQREGIPWTFLDFGLDLQPCIDLIERPANPPGLLALLDEECWFPKATDKSFVEKVAQEQGGHPKFQRPRHLRDQADFSVLHYAGKVDYKANEWLMKNMDPLNDNVAALLHQSTDRLTAEIWKDVEGIVGLEQVSSLGDGPPGGRPRRGMFRTVGQLYKESLSRLMATLSNTNPSFVRCIVPNHEKRAGKLEPRLVLDQLRCNGVLEGIRICRQGFPNRILFQEFRQRYEILTPNAIPKGFMDGKQACEKMIQALELDPNLYRVGQSKIFFRAGVLAQLEEERDLKVTDIIVSFQAAARGYLARRAFQKRQQQQSALRVMQRNCAAYLKLRHWQWWRLFTKVKPLLQVTRQDEVLQARAQELQKVQELQQQSAREVGELQGRVAQLEEERARLAEQLRAEAELCAEAEETRGRLAARKQELELVVSELEARVGEEEECSRQMQTEKKRLQQHIQELEAHLEAEEGARQKLQLEKVTTEAKMKKFEEDLLLLEDQNSKLSKERKLLEDRLAEFSSQAAEEEEKVKSLNKLRLKYEATIADMEDRLRKEEKGRQELEKLKRRLDGESSELQEQMVEQQQRAEELRAQLGRKEEELQAALARAEDEGGARAQLLKSLREAQAALAEAQEDLESERVARTKAEKQRRDLGEELEALRGELEDTLDSTNAQQELRSKREQEVTELKKTLEEETRIHEAAVQELRQRHGQALGELAEQLEQARRGKGAWEKTRLALEAEVSELRAELSSLQTARQEGEQRRRRLELQLQEVQGRAGDGERARAEAAEKLQRAQAELENVSGALNEAESKTIRLSKELSSTEAQLHDAQELLQEETRAKLALGSRVRAMEAEAAGLREQLEEEAAARERAGRELQTAQAQLSEWRRRQEEEAGALEAGEEARRRAAREAEALTQRLAEKTETVDRLERGRRRLQQELDDATMDLEQQRQLVSTLEKKQRKFDQLLAEEKAAVLRAVEERERAEAEGREREARALSLTRALEEEQEAREELERQNRALRAELEALLSSKDDVGKSVHELERACRVAEQAANDLRAQVTELEDELTAAEDAKLRLEVTVQALKTQHERDLQGRDEAGEERRRQLAKQLRDAEVERDEERKQRTLAVAARKKLEGELEELKAQMASAGQGKEEAVKQLRKMQAQMKELWREVEETRTSREEIFSQNRESEKRLKGLEAEVLRLQEELAASDRARRQAQQDRDEMADEVANGNLSKAAILEEKRQLEGRLGQLEEELEEEQSNSELLNDRYRKLLLQVESLTTELSAERSFSAKAESGRQQLERQIQELRGRLGEEDAGARARHKMTIAALESKLAQAEEQLEQETRERILSGKLVRRAEKRLKEVVLQVEEERRVADQLRDQLEKGNLRVKQLKRQLEEAEEEASRAQAGRRRLQRELEDVTESAESMNREVTTLRNRLRRGPLTFTTRTVRQVFRLEEGVASDEEAEEAQPGSGPSPEPEGSPPAHPQ.

The segment at 1–46 (MAAVTMSVPGRKAPPRPGPVPEAAQPFLFTPRGPSAGGGPGSGTSP) is disordered. Position 2 is an N-acetylalanine (A2). A Myosin N-terminal SH3-like domain is found at 51-101 (TARRLVWVPSELHGFEAAALRDEGEEEAEVELAESGRRLRLPRDQIQRMNP). S60 is modified (phosphoserine). The Myosin motor domain occupies 105-800 (SKAEDMAELT…VLAQLEEERD (696 aa)). 198–205 (GESGAGKT) contributes to the ATP binding site. The tract at residues 678-700 (LSRLMATLSNTNPSFVRCIVPNH) is actin-binding. One can recognise an IQ domain in the interval 803-832 (VTDIIVSFQAAARGYLARRAFQKRQQQQSA). A coiled-coil region spans residues 862-1947 (LQVTRQDEVL…VTTLRNRLRR (1086 aa)). Position 1194 is a phosphothreonine (T1194). Disordered stretches follow at residues 1371-1415 (EEAA…RRAA), 1592-1623 (QHERDLQGRDEAGEERRRQLAKQLRDAEVERD), 1905-1942 (EAEEEASRAQAGRRRLQRELEDVTESAESMNREVTTLR), and 1958-1995 (RQVFRLEEGVASDEEAEEAQPGSGPSPEPEGSPPAHPQ). Residues 1930–1942 (SAESMNREVTTLR) show a composition bias toward polar residues. Phosphoserine is present on residues S1969, S1980, S1983, and S1989. The span at 1981–1995 (GPSPEPEGSPPAHPQ) shows a compositional bias: pro residues.

The protein belongs to the TRAFAC class myosin-kinesin ATPase superfamily. Myosin family. In terms of assembly, myosin is a hexameric protein that consists of 2 heavy chain subunits (MHC), 2 alkali light chain subunits (MLC) and 2 regulatory light chain subunits (MLC-2). In terms of tissue distribution, high levels of expression are found in brain (highest in corpus callosum), heart, kidney, liver, lung, small intestine, colon and skeletal muscle. Expression is low in organs composed mainly of smooth muscle, such as aorta, uterus and urinary bladder. No detectable expression is found in thymus, spleen, placenta and lymphocytes.

In terms of biological role, cellular myosin that appears to play a role in cytokinesis, cell shape, and specialized functions such as secretion and capping. This Homo sapiens (Human) protein is Myosin-14 (MYH14).